The primary structure comprises 102 residues: Small ribosomal subunit protein eS24 (102 aa).

Belongs to the eukaryotic ribosomal protein eS24 family.

The polypeptide is Small ribosomal subunit protein eS24 (Methanococcoides burtonii (strain DSM 6242 / NBRC 107633 / OCM 468 / ACE-M)).